Reading from the N-terminus, the 195-residue chain is Imidazoleglycerol-phosphate dehydratase (195 aa).

This sequence belongs to the imidazoleglycerol-phosphate dehydratase family.

The protein resides in the cytoplasm. The enzyme catalyses D-erythro-1-(imidazol-4-yl)glycerol 3-phosphate = 3-(imidazol-4-yl)-2-oxopropyl phosphate + H2O. Its pathway is amino-acid biosynthesis; L-histidine biosynthesis; L-histidine from 5-phospho-alpha-D-ribose 1-diphosphate: step 6/9. The protein is Imidazoleglycerol-phosphate dehydratase of Citrifermentans bemidjiense (strain ATCC BAA-1014 / DSM 16622 / JCM 12645 / Bem) (Geobacter bemidjiensis).